The sequence spans 136 residues: Nucleoside diphosphate kinase (136 aa).

Positions 10, 58, 86, 92, 104, and 114 each coordinate ATP. Residue His-117 is the Pros-phosphohistidine intermediate of the active site.

It belongs to the NDK family. Homotetramer. The cofactor is Mg(2+).

It is found in the cytoplasm. The enzyme catalyses a 2'-deoxyribonucleoside 5'-diphosphate + ATP = a 2'-deoxyribonucleoside 5'-triphosphate + ADP. It carries out the reaction a ribonucleoside 5'-diphosphate + ATP = a ribonucleoside 5'-triphosphate + ADP. In terms of biological role, major role in the synthesis of nucleoside triphosphates other than ATP. The ATP gamma phosphate is transferred to the NDP beta phosphate via a ping-pong mechanism, using a phosphorylated active-site intermediate. The sequence is that of Nucleoside diphosphate kinase from Corynebacterium glutamicum (strain R).